The chain runs to 102 residues: Integration host factor subunit alpha (102 aa).

It belongs to the bacterial histone-like protein family. In terms of assembly, heterodimer of an alpha and a beta chain.

In terms of biological role, this protein is one of the two subunits of integration host factor, a specific DNA-binding protein that functions in genetic recombination as well as in transcriptional and translational control. In Albidiferax ferrireducens (strain ATCC BAA-621 / DSM 15236 / T118) (Rhodoferax ferrireducens), this protein is Integration host factor subunit alpha.